Reading from the N-terminus, the 257-residue chain is Transmembrane protein 101 (257 aa).

Helical transmembrane passes span 24–40 (TRCPFWGCFSQLMLYAE), 52–72 (VPYLYFDMGAAVLCASFMSFG), 77–97 (WFALGAALQLAISTYTAYIGG), 110–130 (YSRTVAIIGGFLVLASGAGEL), 139–159 (SLQSTGQVFLGIYLICVAYSL), 182–202 (LFFVLYGVLALAFLSGYYVTL), 206–226 (ILAVLLPPVMLLIDGNVSYWH), and 233–253 (FWNQMKLLGESVGIFGAAVIL).

Its subcellular location is the membrane. In terms of biological role, may activate NF-kappa-B signaling pathways. This chain is Transmembrane protein 101 (Tmem101), found in Mus musculus (Mouse).